The sequence spans 170 residues: E1B protein, small T-antigen (170 aa).

A disordered region spans residues 137 to 170; sequence PAQPPHGLDPVREEEEEEEEEENLRAGLDPQTEL. A compositionally biased stretch (acidic residues) spans 148-158; that stretch reads REEEEEEEEEE.

It belongs to the adenoviridae E1B 19 kDa protein family.

Its subcellular location is the host cell membrane. It localises to the host nucleus envelope. It is found in the host nucleus lamina. Putative adenovirus Bcl-2 homolog that inhibits apoptosis induced by TNF or FAS pathways, as well as p53-mediated apoptosis. Without E1B 19K function, virus production is compromised because of premature death of host cell. Interacts with Bax protein in cell lysates. This chain is E1B protein, small T-antigen, found in Homo sapiens (Human).